Reading from the N-terminus, the 577-residue chain is Zinc finger-containing ubiquitin peptidase 1 (577 aa).

The C2H2-type 1 zinc finger occupies 2 to 24 (LSCNICGETVNSEPDMKAHLIVH). The C2H2-type 2; atypical zinc-finger motif lies at 29-52 (IICPFCKLSGINYNEICFHIETVH). The segment covering 124–137 (ESRKYQKSREKKPG) has biased composition (basic and acidic residues). The tract at residues 124-145 (ESRKYQKSREKKPGLSEAQGSI) is disordered. The C2H2-type 3; atypical zinc-finger motif lies at 153 to 176 (PECPFCGKIEGCSQDMEIHVKTKH). Residues 192–214 (YDCPMCGLVCTNYHILQEHVDLH) form a C2H2-type 4 zinc finger. Positions 225–247 (DRVQCSSDRELAHRLQQEEDRKR) are MIU. A disordered region spans residues 238 to 260 (RLQQEEDRKRKSEESRQEREEFQ). A zUBD/ZHA region spans residues 248 to 273 (KSEESRQEREEFQKLQRQYGLDNSGG). Residue Lys-261 is modified to N6-acetyllysine. Cys-359 acts as the Nucleophile in catalysis. The active-site Proton acceptor is His-490. Asp-511 is an active-site residue.

The protein belongs to the peptidase C78 family. ZUFSP subfamily. Interacts with RPA1 and RPA2.

It is found in the cytoplasm. It localises to the nucleus. The enzyme catalyses Thiol-dependent hydrolysis of ester, thioester, amide, peptide and isopeptide bonds formed by the C-terminal Gly of ubiquitin (a 76-residue protein attached to proteins as an intracellular targeting signal).. In terms of biological role, deubiquitinase with endodeubiquitinase activity that specifically interacts with and cleaves 'Lys-63'-linked long polyubiquitin chains. Shows only weak activity against 'Lys-11' and 'Lys-48'-linked chains. Plays an important role in genome stability pathways, functioning to prevent spontaneous DNA damage and also promote cellular survival in response to exogenous DNA damage. Modulates the ubiquitination status of replication protein A (RPA) complex proteins in response to replication stress. This is Zinc finger-containing ubiquitin peptidase 1 from Mus musculus (Mouse).